The primary structure comprises 346 residues: Fe(3+) ions import ATP-binding protein FbpC 1 (346 aa).

The ABC transporter domain occupies 5 to 235; sequence LEVDGVDKSF…PIDVPTAEFI (231 aa). 37–44 serves as a coordination point for ATP; the sequence is GPSGCGKT.

The protein belongs to the ABC transporter superfamily. Fe(3+) ion importer (TC 3.A.1.10) family. The complex is composed of two ATP-binding proteins (FbpC), two transmembrane proteins (FbpB) and a solute-binding protein (FbpA).

The protein resides in the cell membrane. The enzyme catalyses Fe(3+)(out) + ATP + H2O = Fe(3+)(in) + ADP + phosphate + H(+). Part of the ABC transporter complex FbpABC involved in Fe(3+) ions import. Responsible for energy coupling to the transport system. The protein is Fe(3+) ions import ATP-binding protein FbpC 1 of Rhodococcus jostii (strain RHA1).